The chain runs to 85 residues: Small ribosomal subunit protein bS18 (85 aa).

This sequence belongs to the bacterial ribosomal protein bS18 family. As to quaternary structure, part of the 30S ribosomal subunit. Forms a tight heterodimer with protein bS6.

Functionally, binds as a heterodimer with protein bS6 to the central domain of the 16S rRNA, where it helps stabilize the platform of the 30S subunit. The chain is Small ribosomal subunit protein bS18 from Hamiltonella defensa subsp. Acyrthosiphon pisum (strain 5AT).